Here is a 219-residue protein sequence, read N- to C-terminus: Envelope protein US9 homolog (219 aa).

At 1 to 193 (MEKAEAAAVV…RHRRRRVALT (193 aa)) the chain is on the intravirion side. Residues 145–146 (LL) carry the Di-leucine internalization motif motif. The interval 153-168 (DYDSESGCYYSESDNE) is acidic. Phosphoserine; by host CK2 is present on residues Ser-163 and Ser-165. Residues 194–214 (VAGVILVVVLCAISGIVGAFL) form a helical; Signal-anchor for type II membrane protein membrane-spanning segment. Topologically, residues 215–219 (ARVFP) are virion surface.

It belongs to the alphaherpesvirinae envelope protein US9 family. In terms of processing, phosphorylated on serines within the acidic cluster. Phosphorylation determines whether endocytosed viral US9 traffics to the trans-Golgi network or recycles to the cell membrane.

It is found in the virion membrane. The protein localises to the host Golgi apparatus membrane. It localises to the host smooth endoplasmic reticulum membrane. The protein resides in the host cell membrane. Functionally, essential for the anterograde spread of the infection throughout the host nervous system. Together with the gE/gI heterodimer, US9 is involved in the sorting and transport of viral structural components toward axon tips. The chain is Envelope protein US9 homolog from Equine herpesvirus 1 (strain Ab4p) (EHV-1).